The chain runs to 922 residues: Up-regulator of cell proliferation (922 aa).

The tract at residues 1-20 is disordered; sequence MASSGHSDLGEVTSEIKASE. Serine 3 carries the post-translational modification Phosphoserine. In terms of domain architecture, VLIG-type G spans 680–920; sequence RSRLVVLSAL…NIQQLIELVR (241 aa).

Belongs to the TRAFAC class dynamin-like GTPase superfamily. Very large inducible GTPase (VLIG) family.

It is found in the cytoplasm. The protein resides in the nucleus. Its function is as follows. May be involved in cell cycle progression through the regulation of cyclin D1 expression. The protein is Up-regulator of cell proliferation (URGCP) of Bos taurus (Bovine).